Reading from the N-terminus, the 152-residue chain is Ribosome maturation factor RimP (152 aa).

Belongs to the RimP family.

The protein resides in the cytoplasm. In terms of biological role, required for maturation of 30S ribosomal subunits. The chain is Ribosome maturation factor RimP from Ruminiclostridium cellulolyticum (strain ATCC 35319 / DSM 5812 / JCM 6584 / H10) (Clostridium cellulolyticum).